The primary structure comprises 331 residues: Holliday junction branch migration complex subunit RuvB (331 aa).

The large ATPase domain (RuvB-L) stretch occupies residues 1–178 (MRNSIFEQEE…FGITLRLDFY (178 aa)). ATP-binding positions include leucine 17, arginine 18, glycine 59, lysine 62, threonine 63, threonine 64, 125 to 127 (EDY), arginine 168, tyrosine 178, and arginine 215. Position 63 (threonine 63) interacts with Mg(2+). The small ATPAse domain (RuvB-S) stretch occupies residues 179 to 249 (TVSELLQLLQ…FADLALNKME (71 aa)). The head domain (RuvB-H) stretch occupies residues 252–331 (QFGLDKLDYT…LSTINSARLP (80 aa)). DNA contacts are provided by arginine 307 and arginine 312.

It belongs to the RuvB family. Homohexamer. Forms an RuvA(8)-RuvB(12)-Holliday junction (HJ) complex. HJ DNA is sandwiched between 2 RuvA tetramers; dsDNA enters through RuvA and exits via RuvB. An RuvB hexamer assembles on each DNA strand where it exits the tetramer. Each RuvB hexamer is contacted by two RuvA subunits (via domain III) on 2 adjacent RuvB subunits; this complex drives branch migration. In the full resolvosome a probable DNA-RuvA(4)-RuvB(12)-RuvC(2) complex forms which resolves the HJ.

It is found in the cytoplasm. The catalysed reaction is ATP + H2O = ADP + phosphate + H(+). In terms of biological role, the RuvA-RuvB-RuvC complex processes Holliday junction (HJ) DNA during genetic recombination and DNA repair, while the RuvA-RuvB complex plays an important role in the rescue of blocked DNA replication forks via replication fork reversal (RFR). RuvA specifically binds to HJ cruciform DNA, conferring on it an open structure. The RuvB hexamer acts as an ATP-dependent pump, pulling dsDNA into and through the RuvAB complex. RuvB forms 2 homohexamers on either side of HJ DNA bound by 1 or 2 RuvA tetramers; 4 subunits per hexamer contact DNA at a time. Coordinated motions by a converter formed by DNA-disengaged RuvB subunits stimulates ATP hydrolysis and nucleotide exchange. Immobilization of the converter enables RuvB to convert the ATP-contained energy into a lever motion, pulling 2 nucleotides of DNA out of the RuvA tetramer per ATP hydrolyzed, thus driving DNA branch migration. The RuvB motors rotate together with the DNA substrate, which together with the progressing nucleotide cycle form the mechanistic basis for DNA recombination by continuous HJ branch migration. Branch migration allows RuvC to scan DNA until it finds its consensus sequence, where it cleaves and resolves cruciform DNA. In Neorickettsia sennetsu (strain ATCC VR-367 / Miyayama) (Ehrlichia sennetsu), this protein is Holliday junction branch migration complex subunit RuvB.